Consider the following 239-residue polypeptide: Transcriptional regulatory protein BtsR (239 aa).

Residues 3–116 (KVLIVDDEPL…RLEKTLHRLR (114 aa)) form the Response regulatory domain. Asp54 carries the post-translational modification 4-aspartylphosphate. In terms of domain architecture, HTH LytTR-type spans 137–239 (IPCTGHSRIY…LKSLKEAIGL (103 aa)).

Post-translationally, phosphorylated by BtsS.

In terms of biological role, member of the two-component regulatory system BtsS/BtsR. BtsR regulates expression of btsT by binding to its promoter region. This chain is Transcriptional regulatory protein BtsR, found in Salmonella typhi.